A 170-amino-acid chain; its full sequence is MDLRDYIASIPDYPEKGIVFRDISPLMANGDAYREATKQIVDYAKEKRIDMVVGPEARGFIVGCPVAYELGVGFAPVRKKGKLPRETIEVTYDLEYGSDTLTLHKDAITPGQRVLICDDLLATGGTIKATIELVEQLGGIVVGCAFLIELMDLHGRDKIDGYDIVTLMEY.

This sequence belongs to the purine/pyrimidine phosphoribosyltransferase family. In terms of assembly, homodimer.

The protein localises to the cytoplasm. It carries out the reaction AMP + diphosphate = 5-phospho-alpha-D-ribose 1-diphosphate + adenine. It participates in purine metabolism; AMP biosynthesis via salvage pathway; AMP from adenine: step 1/1. In terms of biological role, catalyzes a salvage reaction resulting in the formation of AMP, that is energically less costly than de novo synthesis. The sequence is that of Adenine phosphoribosyltransferase from Enterococcus faecalis (strain ATCC 700802 / V583).